Reading from the N-terminus, the 226-residue chain is ATP-dependent dethiobiotin synthetase BioD (226 aa).

Glycine 12–valine 17 lines the ATP pocket. Mg(2+) is bound at residue threonine 16. Lysine 37 is a catalytic residue. Threonine 41 is a binding site for substrate. ATP contacts are provided by residues aspartate 49, glutamate 108–glycine 111, glycine 169–serine 170, and proline 197–glycine 199. Positions 49 and 108 each coordinate Mg(2+).

Belongs to the dethiobiotin synthetase family. As to quaternary structure, homodimer. Mg(2+) serves as cofactor.

It is found in the cytoplasm. It carries out the reaction (7R,8S)-7,8-diammoniononanoate + CO2 + ATP = (4R,5S)-dethiobiotin + ADP + phosphate + 3 H(+). The protein operates within cofactor biosynthesis; biotin biosynthesis; biotin from 7,8-diaminononanoate: step 1/2. Functionally, catalyzes a mechanistically unusual reaction, the ATP-dependent insertion of CO2 between the N7 and N8 nitrogen atoms of 7,8-diaminopelargonic acid (DAPA, also called 7,8-diammoniononanoate) to form a ureido ring. This chain is ATP-dependent dethiobiotin synthetase BioD, found in Mycobacterium bovis (strain BCG / Pasteur 1173P2).